The sequence spans 1238 residues: uncharacterized protein (1238 aa).

Disordered regions lie at residues 22-83, 96-150, 169-250, 264-694, 739-915, 936-955, and 1057-1089; these read LQSA…QEHL, SSRQ…IASP, FEPD…HQML, QLNS…AAMV, TKAA…SVPE, THSA…APHE, and PKIS…QCSS. Low complexity predominate over residues 35–49; that stretch reads QPPNQQPHQTQQQQQ. Residues 58–72 show a composition bias toward polar residues; the sequence is PSIQNLTTNATPTST. The span at 73-83 shows a compositional bias: low complexity; the sequence is QLQQQQQQEHL. The segment covering 96–110 has biased composition (polar residues); that stretch reads SSRQNQGAPSGNLSN. A compositionally biased stretch (low complexity) spans 125–145; that stretch reads SVSGNTNHTGSNSSSNSGSNN. A compositionally biased stretch (polar residues) spans 188–204; the sequence is SASSASKLPTHNVQQQH. Low complexity-rich tracts occupy residues 272-287, 309-334, and 393-406; these read SYQH…QSHP, PLLT…SSQH, and SNEE…NSSN. Over residues 433 to 450 the composition is skewed to polar residues; that stretch reads SKPQHPQQAANLNNSCSP. A Phosphoserine modification is found at Ser-453. Residues 463 to 472 show a composition bias toward polar residues; sequence PFSTQKQSQT. A compositionally biased stretch (basic and acidic residues) spans 523 to 536; that stretch reads TEQHRMQQDDEPPK. 2 stretches are compositionally biased toward low complexity: residues 549-570 and 632-641; these read QSNS…SQSS and TTAAVAAPPA. At Thr-642 the chain carries Phosphothreonine. A compositionally biased stretch (basic and acidic residues) spans 678 to 688; sequence ERISSPEKPAE. Ser-682, Ser-749, and Ser-753 each carry phosphoserine. The segment covering 755 to 764 has biased composition (polar residues); sequence IPQSRSTSTP. Phosphoserine occurs at positions 793 and 799. Residues 832–860 are compositionally biased toward low complexity; sequence STSAAAAAALAARQLSEAASATKSKPAAG. Over residues 861-874 the composition is skewed to basic residues; sequence AKKKNAGVKGKKGS. A compositionally biased stretch (basic and acidic residues) spans 937–947; that stretch reads HSAEDVNEKQT. Residues 1071 to 1089 show a composition bias toward polar residues; the sequence is DSSISYSDDPNESRSQCSS. The segment at 1089–1131 adopts a C2HC pre-PHD-type; degenerate zinc-finger fold; that stretch reads SVDLLDCSTESKFVETFRGMGKTSENGFEVWLHEDCAVWSNDI. Residue Ser-1099 is modified to Phosphoserine. The PHD-type zinc finger occupies 1151 to 1199; that stretch reads YQCVLCQQTGASICCFQRCCKAAAHVPCGRSANWSLSEEDRKVYCHLHR.

This is an uncharacterized protein from Drosophila melanogaster (Fruit fly).